A 271-amino-acid chain; its full sequence is Formamidopyrimidine-DNA glycosylase (271 aa).

P2 acts as the Schiff-base intermediate with DNA in catalysis. The active-site Proton donor is E3. The active-site Proton donor; for beta-elimination activity is the K57. 3 residues coordinate DNA: H90, R109, and R151. The segment at 236-270 (MVYGRAGEACVTCKTKLQEIRQSNRSSVFCPSCQQ) adopts an FPG-type zinc-finger fold. The active-site Proton donor; for delta-elimination activity is R260.

Belongs to the FPG family. As to quaternary structure, monomer. The cofactor is Zn(2+).

It catalyses the reaction Hydrolysis of DNA containing ring-opened 7-methylguanine residues, releasing 2,6-diamino-4-hydroxy-5-(N-methyl)formamidopyrimidine.. The enzyme catalyses 2'-deoxyribonucleotide-(2'-deoxyribose 5'-phosphate)-2'-deoxyribonucleotide-DNA = a 3'-end 2'-deoxyribonucleotide-(2,3-dehydro-2,3-deoxyribose 5'-phosphate)-DNA + a 5'-end 5'-phospho-2'-deoxyribonucleoside-DNA + H(+). Functionally, involved in base excision repair of DNA damaged by oxidation or by mutagenic agents. Acts as a DNA glycosylase that recognizes and removes damaged bases. Has a preference for oxidized purines, such as 7,8-dihydro-8-oxoguanine (8-oxoG). Has AP (apurinic/apyrimidinic) lyase activity and introduces nicks in the DNA strand. Cleaves the DNA backbone by beta-delta elimination to generate a single-strand break at the site of the removed base with both 3'- and 5'-phosphates. The polypeptide is Formamidopyrimidine-DNA glycosylase (Colwellia psychrerythraea (strain 34H / ATCC BAA-681) (Vibrio psychroerythus)).